The primary structure comprises 281 residues: Probable endonuclease 4 (281 aa).

His-69, His-109, Glu-145, Asp-179, His-182, His-216, Asp-229, His-231, and Glu-261 together coordinate Zn(2+).

Belongs to the AP endonuclease 2 family. It depends on Zn(2+) as a cofactor.

It catalyses the reaction Endonucleolytic cleavage to 5'-phosphooligonucleotide end-products.. In terms of biological role, endonuclease IV plays a role in DNA repair. It cleaves phosphodiester bonds at apurinic or apyrimidinic (AP) sites, generating a 3'-hydroxyl group and a 5'-terminal sugar phosphate. The sequence is that of Probable endonuclease 4 from Chlorobaculum parvum (strain DSM 263 / NCIMB 8327) (Chlorobium vibrioforme subsp. thiosulfatophilum).